The primary structure comprises 1377 residues: Clustered mitochondria protein homolog (1377 aa).

The segment at 1 to 61 (MLKSIQRNGK…GETKKKSDSE (61 aa)) is disordered. The Clu domain maps to 353–595 (RAEDTFSSKL…RTFPPDVNFL (243 aa)). Residues 519–552 (VYGSIDFGKTVLSHEKYLELLNNAGKHLKIYPHS) form a TPR 1 repeat. Disordered stretches follow at residues 651–700 (NKRQ…VPKV) and 886–917 (DVLTKSGSSGKQQRKQNKRTAAGGGKGGKSSF). The segment covering 655-690 (QKQDTPKEETKAIEPAAKEDSANNNKEEPAAKKGEP) has biased composition (basic and acidic residues). Over residues 886–896 (DVLTKSGSSGK) the composition is skewed to polar residues. TPR repeat units follow at residues 1022 to 1055 (AYNFYTTGQTKIQQGYFKDGYDLISEALNLLNNV), 1148 to 1181 (ALLDSNISLILHAVGEYELSLRFLEHALALNIKY), and 1183 to 1216 (GEKSLKVAVSYHLVARTQSCMGDFRSALNNEKET). The segment at 1310-1377 (KEGGAAGESS…SKANPVASSS (68 aa)) is disordered. The segment covering 1364–1377 (ASSSSKANPVASSS) has biased composition (low complexity).

It belongs to the CLU family.

Its subcellular location is the cytoplasm. MRNA-binding protein involved in proper cytoplasmic distribution of mitochondria. In Culex quinquefasciatus (Southern house mosquito), this protein is Clustered mitochondria protein homolog.